A 558-amino-acid polypeptide reads, in one-letter code: Glucose-6-phosphate isomerase (558 aa).

The residue at position 2 (alanine 2) is an N-acetylalanine. Lysine 12 is subject to N6-acetyllysine. Lysine 34 bears the N6-(2-hydroxyisobutyryl)lysine mark. Position 107 is a phosphoserine (serine 107). Threonine 109 is subject to Phosphothreonine. Lysine 142 carries the post-translational modification N6-acetyllysine. 159 to 160 contacts D-glucose 6-phosphate; sequence GS. At serine 185 the chain carries Phosphoserine; by CK2. Residue 210–215 coordinates D-glucose 6-phosphate; that stretch reads SKTFTT. The residue at position 250 (threonine 250) is a Phosphothreonine. D-glucose 6-phosphate is bound by residues glutamine 354, glutamate 358, and histidine 389. The active-site Proton donor is glutamate 358. Residue histidine 389 is part of the active site. An N6-acetyllysine; alternate modification is found at lysine 454. Lysine 454 carries the post-translational modification N6-malonyllysine; alternate. An N6-succinyllysine; alternate modification is found at lysine 454. The residue at position 455 (serine 455) is a Phosphoserine. Lysine 519 contacts D-glucose 6-phosphate. Residue lysine 519 is part of the active site.

It belongs to the GPI family. Homodimer; in the catalytically active form. Monomer in the secreted form. In terms of processing, phosphorylation at Ser-185 by CK2 has been shown to decrease enzymatic activity and may contribute to secretion by a non-classical secretory pathway. ISGylated.

It is found in the cytoplasm. The protein resides in the secreted. It carries out the reaction alpha-D-glucose 6-phosphate = beta-D-fructose 6-phosphate. The protein operates within carbohydrate degradation; glycolysis; D-glyceraldehyde 3-phosphate and glycerone phosphate from D-glucose: step 2/4. Its function is as follows. In the cytoplasm, catalyzes the conversion of glucose-6-phosphate to fructose-6-phosphate, the second step in glycolysis, and the reverse reaction during gluconeogenesis. Besides it's role as a glycolytic enzyme, also acts as a secreted cytokine: acts as an angiogenic factor (AMF) that stimulates endothelial cell motility. Acts as a neurotrophic factor, neuroleukin, for spinal and sensory neurons. It is secreted by lectin-stimulated T-cells and induces immunoglobulin secretion. This is Glucose-6-phosphate isomerase from Macaca fascicularis (Crab-eating macaque).